The chain runs to 81 residues: Arminin 2a (81 aa).

An N-terminal signal peptide occupies residues 1–18 (MKTVFAILFLAFIALTYA). Positions 19-57 (RSYEDVKEEIKNEVVKEILEDLEEESDELDDKSKEINDA) are excised as a propeptide. Ala-78 is modified (alanine amide).

This sequence belongs to the arminin family. Expressed in entodermal epithelium along the body column.

It localises to the secreted. The protein localises to the target cell membrane. Antimicrobial peptide with a broad-spectrum antimicrobial activity. Keeps its antibacterial activity under a wide range of salt concentrations that mimic physiological conditions of human blood, which is surprising, since Hydra is an obligate freshwater animal with nearly no salt tolerance. Does not affect red blood cells. In Hydra vulgaris (Hydra), this protein is Arminin 2a.